The primary structure comprises 100 residues: Urease subunit gamma (100 aa).

It belongs to the urease gamma subunit family. As to quaternary structure, heterotrimer of UreA (gamma), UreB (beta) and UreC (alpha) subunits. Three heterotrimers associate to form the active enzyme.

It localises to the cytoplasm. It catalyses the reaction urea + 2 H2O + H(+) = hydrogencarbonate + 2 NH4(+). Its pathway is nitrogen metabolism; urea degradation; CO(2) and NH(3) from urea (urease route): step 1/1. This Staphylococcus epidermidis (strain ATCC 35984 / DSM 28319 / BCRC 17069 / CCUG 31568 / BM 3577 / RP62A) protein is Urease subunit gamma.